The following is a 930-amino-acid chain: Progesterone receptor (930 aa).

Residues 1–11 (MTELKAKEPRA) show a composition bias toward basic and acidic residues. Disordered regions lie at residues 1-133 (MTEL…ASPA) and 148-260 (LPED…SGAA). The segment at 1 to 165 (MTELKAKEPR…PATKGVLAPL (165 aa)) is AF3; mediates transcriptional activation. Positions 1–565 (MTELKAKEPR…PQYSFESLPQ (565 aa)) are modulating, Pro-Rich. Residue K7 forms a Glycyl lysine isopeptide (Lys-Gly) (interchain with G-Cter in SUMO) linkage. A Phosphoserine modification is found at S20. Over residues 38 to 49 (QGSQTSEASSVV) the composition is skewed to polar residues. The LXXL motif 1 signature appears at 56–60 (LDGLL). A Phosphoserine modification is found at S82. The LXXL motif 2 motif lies at 116 to 120 (LDTLL). S131 is modified (phosphoserine). The tract at residues 166–304 (MSRPEDKAGD…LATSVVDFIH (139 aa)) is mediates transcriptional transrepression. The Nuclear localization signal signature appears at 184–188 (KVLPR). The segment covering 187 to 204 (PRGLSPSRQLLLPSSGSP) has biased composition (low complexity). S191 and S212 each carry phosphoserine. S293 carries the post-translational modification Phosphoserine; by MAPK1. A disordered region spans residues 334–356 (AASPFVPQRGSPSASSTPVAGGD). S344 is modified (phosphoserine; by MAPK). Residue K387 forms a Glycyl lysine isopeptide (Lys-Gly) (interchain with G-Cter in SUMO); alternate linkage. Residue K387 forms a Glycyl lysine isopeptide (Lys-Gly) (interchain with G-Cter in ubiquitin); alternate linkage. S399 is modified (phosphoserine; by CDK2). The disordered stretch occupies residues 415–454 (DFQLAAPPPPSLPPRVPSSRPGEAAVAASPGSASVSSSSS). Over residues 420–430 (APPPPSLPPRV) the composition is skewed to pro residues. Residues 431-454 (PSSRPGEAAVAASPGSASVSSSSS) show a composition bias toward low complexity. Residues 457-547 (STLECILYKA…VYTPYLNYLR (91 aa)) are AF1; mediates transcriptional activation. K532 participates in a covalent cross-link: Glycyl lysine isopeptide (Lys-Gly) (interchain with G-Cter in SUMO). Residues 566–640 (KICLICGDEA…AGMVLGGRKF (75 aa)) constitute a DNA-binding region (nuclear receptor). 2 consecutive NR C4-type zinc fingers follow at residues 568–588 (CLIC…CGSC) and 604–628 (CAGR…LRKC). The residue at position 673 (S673) is a Phosphoserine. The NR LBD domain occupies 676–910 (QEIQLIPPLI…EFPEMMSEVI (235 aa)). Residues 684 to 930 (LINLLMSIEP…MVKPLLFHKK (247 aa)) are AF2; mediates transcriptional activation. Residue R763 participates in progesterone binding.

This sequence belongs to the nuclear hormone receptor family. NR3 subfamily. In terms of assembly, interacts with SMARD1 and UNC45A. Interacts with CUEDC2; the interaction promotes ubiquitination, decreases sumoylation, and represses transcriptional activity. Interacts with PIAS3; the interaction promotes sumoylation of PR in a hormone-dependent manner, inhibits DNA-binding, and alters nuclear export. Interacts with SP1; the interaction requires ligand-induced phosphorylation on Ser-344 by ERK1/2-MAPK. Interacts with PRMT2. Interacts with NCOA2 and NCOA1. Interacts with KLF9. Interacts with GTF2B. Phosphorylated on multiple serine sites. Several of these sites are hormone-dependent. Phosphorylation on Ser-293 is highly hormone-dependent and modulates ubiquitination and sumoylation on Lys-387. Phosphorylation on Ser-102 and Ser-344 also requires induction by hormone. Basal phosphorylation on Ser-82, Ser-191 and Ser-399 is increased in response to progesterone and can be phosphorylated in vitro by the CDK2-A1 complex. Increased levels of phosphorylation on Ser-399 also in the presence of EGF, heregulin, IGF, PMA and FBS. Phosphorylation at this site by CDK2 is ligand-independent, and increases nuclear translocation and transcriptional activity. Phosphorylation at Ser-293, but not at Ser-191, is impaired during the G(2)/M phase of the cell cycle. Phosphorylation on Ser-344 by ERK1/2 MAPK is required for interaction with SP1. In terms of processing, sumoylation is hormone-dependent and represses transcriptional activity. Sumoylation on all three sites is enhanced by PIAS3. Desumoylated by SENP1. Sumoylation on Lys-387, the main site of sumoylation, is repressed by ubiquitination on the same site, and modulated by phosphorylation at Ser-293. Post-translationally, ubiquitination is hormone-dependent and represses sumoylation on the same site. Promoted by MAPK-mediated phosphorylation on Ser-293. Ubiquitinated by UBR5, leading to its degradation: UBR5 specifically recognizes and binds ligand-bound PGR when it is not associated with coactivators (NCOAs). In presence of NCOAs, the UBR5-degron is not accessible, preventing its ubiquitination and degradation. Palmitoylated by ZDHHC7 and ZDHHC21. Palmitoylation is required for plasma membrane targeting and for rapid intracellular signaling via ERK and AKT kinases and cAMP generation.

Its subcellular location is the nucleus. It localises to the cytoplasm. In terms of biological role, the steroid hormones and their receptors are involved in the regulation of eukaryotic gene expression and affect cellular proliferation and differentiation in target tissues. Transcriptional activator of several progesteron-dependent promoters in a variety of cell types. Involved in activation of SRC-dependent MAPK signaling on hormone stimulation. The polypeptide is Progesterone receptor (PGR) (Oryctolagus cuniculus (Rabbit)).